The sequence spans 73 residues: uncharacterized protein (73 aa).

Helical transmembrane passes span 4–24 (LIPVALLTALLAGCAHDSPCV) and 51–71 (AGAIAGGAAAVAGLTMGIIAL).

Its subcellular location is the cell membrane. This is an uncharacterized protein from Escherichia coli O157:H7.